Here is an 870-residue protein sequence, read N- to C-terminus: MHMRLNKRRRNHVQEQMSELPQDAKNDSLAAAQVIFKRHADNANSTPPSPVGLDSAGHLDKQADTAQRVHKVGTPSGTSSSHNSGNEGMHKVTKPLGENTATTAPIAIKQPVRVVRASPTAIVSPTSHTPLDAATAAANVVAEKSKIRTTQQQLQDKKRRDIENAHHAASAAAVTSSNLAVGSPPSQYIPSVPTLNVTSPQMRNSSQNIDRRSKSNEEAHNGHEKMMNSRSNSINSSTIKGSVSEPNTVTPLRQNSPSNMDDIIQKMEAVDIDEGRKNSFVMNGSGDSVDSLKPNVVRRPMRTPSGRRVRPPSPIDKIGSIQEPHLESTGFNDQNDFSEMSSLIDGSSSEDITKIRGSGIRERSPVDGVEHGGMSVNIPMQRSLSSDVLSPSQQAAMVAATKLSPSTQTLPVEELEYLASTGDVSAYKALNKINGTNMAYKGTIPDLIPSRARAQKTSKLKFKIFGGGKNSDRRNNATPIGYDPVMNISTDFGGKKVVESNQNNVKFKTTMRSQKYLGNDNLDDNDLRTQYIDDDDDDDDYDSAYEDLDYSRDDSEAMYKGDRESSNPRSNSLLQSSSYSGKVGFNSNANSGTSINNSGNVSNLDYSLRDGVAEKKKSRRDKIKKKLKSTASVVPYYPHYALTHLASGVSTVNSNLNNSNKNTKWFNEDKPWKSHKDVGFVTSQERKRYEAMWVTNRYLYLNLLPWWPKEEVEKDEDDSASNLNSNASTNVGGVLSDGDNEEDDVTRFLLSLPADGLMLNLVAKDIWERSNLPNDLLKQIYDLVDTRKDGTLNRESFLVGMWLVDQCLYGRKLPQELDPKIWDSVDRWVLNVVNSTMMTALERKQKKKMMKKELKNIKREQKQAIAEQHN.

The segment covering 1–11 (MHMRLNKRRRN) has biased composition (basic residues). Disordered stretches follow at residues 1–25 (MHMR…QDAK), 38–57 (RHAD…DSAG), 62–92 (QADT…MHKV), 147–260 (IRTT…PSNM), 275–315 (GRKN…PSPI), 516–579 (YLGN…SSSY), and 717–738 (DDSA…LSDG). Polar residues predominate over residues 75 to 86 (PSGTSSSHNSGN). Residues 155-166 (QDKKRRDIENAH) are compositionally biased toward basic and acidic residues. Residues 167–181 (HAASAAAVTSSNLAV) show a composition bias toward low complexity. The segment covering 184-208 (PPSQYIPSVPTLNVTSPQMRNSSQN) has biased composition (polar residues). Residues 209 to 227 (IDRRSKSNEEAHNGHEKMM) are compositionally biased toward basic and acidic residues. Low complexity predominate over residues 228 to 237 (NSRSNSINSS). Positions 238–259 (TIKGSVSEPNTVTPLRQNSPSN) are enriched in polar residues. The segment covering 299 to 310 (RPMRTPSGRRVR) has biased composition (basic residues). Acidic residues predominate over residues 532–548 (IDDDDDDDDYDSAYEDL). Over residues 549–566 (DYSRDDSEAMYKGDRESS) the composition is skewed to basic and acidic residues. 2 stretches are compositionally biased toward low complexity: residues 567–579 (NPRS…SSSY) and 720–730 (ASNLNSNASTN). One can recognise an EH domain in the interval 739–828 (DNEEDDVTRF…PKIWDSVDRW (90 aa)).

Belongs to the IRS4 family.

Functionally, positive regulator of phosphatidylinositol 4,5-bisphosphate turnover and negatively regulates signaling through the cell integrity pathway. Involved in rDNA silencing. The protein is Increased rDNA silencing protein 4 (IRS4) of Candida glabrata (strain ATCC 2001 / BCRC 20586 / JCM 3761 / NBRC 0622 / NRRL Y-65 / CBS 138) (Yeast).